The primary structure comprises 438 residues: Argininosuccinate lyase (438 aa).

Belongs to the lyase 1 family. Argininosuccinate lyase subfamily.

It localises to the cytoplasm. It carries out the reaction 2-(N(omega)-L-arginino)succinate = fumarate + L-arginine. Its pathway is amino-acid biosynthesis; L-arginine biosynthesis; L-arginine from L-ornithine and carbamoyl phosphate: step 3/3. In Clostridioides difficile (strain 630) (Peptoclostridium difficile), this protein is Argininosuccinate lyase.